Consider the following 361-residue polypeptide: Anthranilate phosphoribosyltransferase (361 aa).

5-phospho-alpha-D-ribose 1-diphosphate contacts are provided by residues G80, 83 to 84 (GD), T88, 90 to 93 (NVST), 108 to 116 (KHGNYSVSS), and S120. G80 lines the anthranilate pocket. A Mg(2+)-binding site is contributed by S92. N111 serves as a coordination point for anthranilate. R166 contacts anthranilate. Residues D224 and E225 each contribute to the Mg(2+) site. Positions 338 to 361 (EGDGEAASTDSAAASTTAGPEDDD) are disordered. Positions 343–355 (AASTDSAAASTTA) are enriched in low complexity.

Belongs to the anthranilate phosphoribosyltransferase family. Homodimer. Requires Mg(2+) as cofactor.

The enzyme catalyses N-(5-phospho-beta-D-ribosyl)anthranilate + diphosphate = 5-phospho-alpha-D-ribose 1-diphosphate + anthranilate. Its pathway is amino-acid biosynthesis; L-tryptophan biosynthesis; L-tryptophan from chorismate: step 2/5. Its function is as follows. Catalyzes the transfer of the phosphoribosyl group of 5-phosphorylribose-1-pyrophosphate (PRPP) to anthranilate to yield N-(5'-phosphoribosyl)-anthranilate (PRA). The chain is Anthranilate phosphoribosyltransferase from Halorubrum lacusprofundi (strain ATCC 49239 / DSM 5036 / JCM 8891 / ACAM 34).